A 384-amino-acid chain; its full sequence is Probable splicing factor YJU2B (384 aa).

The disordered stretch occupies residues 1 to 28 (MGERKGTNKYYPPDFDPAKHGSLNGYRN). Positions 183–212 (NSLLRSKFREEKKQIKEEEERDQALLTKAS) form a coiled coil. A disordered region spans residues 275–331 (GIRTKTPSVPGISPVSLGVVRRTSKEENKAEDKSVESPDGSRSRKAEGMCRKEETGC). A compositionally biased stretch (basic and acidic residues) spans 297–331 (TSKEENKAEDKSVESPDGSRSRKAEGMCRKEETGC).

This sequence belongs to the CWC16 family.

Its subcellular location is the nucleus. May be involved in mRNA splicing. This chain is Probable splicing factor YJU2B (yju2b), found in Xenopus laevis (African clawed frog).